A 142-amino-acid chain; its full sequence is Midkine (142 aa).

Positions 1 to 21 are cleaved as a signal peptide; sequence MQPRGLLLLLALLLLAAAAEA. Intrachain disulfides connect Cys36-Cys60, Cys44-Cys69, Cys51-Cys73, Cys83-Cys115, and Cys93-Cys125.

Belongs to the pleiotrophin family.

The protein resides in the cell surface. It is found in the secreted. It localises to the extracellular space. The protein localises to the extracellular matrix. Its subcellular location is the basement membrane. In terms of biological role, has mitogenic activity, and neurite extension activity for PC12 cells. This Gallus gallus (Chicken) protein is Midkine (RIHB).